Consider the following 293-residue polypeptide: Hydroxyquinol 1,2-dioxygenase (293 aa).

Positions 164, 197, 221, and 223 each coordinate Fe cation.

It belongs to the intradiol ring-cleavage dioxygenase family. As to quaternary structure, homodimer. Fe(3+) is required as a cofactor.

It catalyses the reaction benzene-1,2,4-triol + O2 = maleylacetate + 2 H(+). It participates in aromatic compound metabolism; beta-ketoadipate pathway; 3-oxoadipate from 3,4-dihydroxybenzoate: step 2/4. Inhibited by 3,5-dichlorocatechol, chlorohydroquinone and 4,5-dibromocatechol. In terms of biological role, catalyzes the ortho-cleavage of the aromatic ring of hydroxyquinol. In Nocardioides simplex (Arthrobacter simplex), this protein is Hydroxyquinol 1,2-dioxygenase (chqB).